A 732-amino-acid chain; its full sequence is Alpha-galactosidase Mel36A (732 aa).

Residues 370–371 (DD), Trp-415, Arg-447, 480–484 (KWDMN), 530–533 (CSGG), and Asp-552 contribute to the substrate site. Asp-482 (nucleophile) is an active-site residue. Asp-552 serves as the catalytic Proton donor.

The protein belongs to the glycosyl hydrolase 36 family. As to quaternary structure, homotetramer.

The enzyme catalyses Hydrolysis of terminal, non-reducing alpha-D-galactose residues in alpha-D-galactosides, including galactose oligosaccharides, galactomannans and galactolipids.. In terms of biological role, hydrolyzes the short-chain alpha-galactosaccharide raffinose. The sequence is that of Alpha-galactosidase Mel36A from Lactobacillus acidophilus (strain ATCC 700396 / NCK56 / N2 / NCFM).